Consider the following 196-residue polypeptide: Endonuclease V (196 aa).

Residues Asp37 and Asp98 each coordinate Mg(2+).

The protein belongs to the endonuclease V family. Mg(2+) is required as a cofactor.

The protein resides in the cytoplasm. It catalyses the reaction Endonucleolytic cleavage at apurinic or apyrimidinic sites to products with a 5'-phosphate.. Its function is as follows. DNA repair enzyme involved in the repair of deaminated bases. Selectively cleaves double-stranded DNA at the second phosphodiester bond 3' to a deoxyinosine leaving behind the intact lesion on the nicked DNA. In Sulfolobus acidocaldarius (strain ATCC 33909 / DSM 639 / JCM 8929 / NBRC 15157 / NCIMB 11770), this protein is Endonuclease V.